The following is a 325-amino-acid chain: NADH-quinone oxidoreductase subunit H (325 aa).

8 helical membrane-spanning segments follow: residues 11-31, 81-101, 114-134, 154-174, 186-206, 237-257, 265-285, and 304-324; these read ILLS…CGAF, VIFT…FAIV, IGIL…LFAG, LSYE…AGSF, LWNV…GVAV, FFVG…TLFF, LPPF…FILI, and VCLP…LWQA.

Belongs to the complex I subunit 1 family. In terms of assembly, NDH-1 is composed of 13 different subunits. Subunits NuoA, H, J, K, L, M, N constitute the membrane sector of the complex.

The protein localises to the cell inner membrane. It catalyses the reaction a quinone + NADH + 5 H(+)(in) = a quinol + NAD(+) + 4 H(+)(out). In terms of biological role, NDH-1 shuttles electrons from NADH, via FMN and iron-sulfur (Fe-S) centers, to quinones in the respiratory chain. The immediate electron acceptor for the enzyme in this species is believed to be ubiquinone. Couples the redox reaction to proton translocation (for every two electrons transferred, four hydrogen ions are translocated across the cytoplasmic membrane), and thus conserves the redox energy in a proton gradient. This subunit may bind ubiquinone. This Klebsiella pneumoniae (strain 342) protein is NADH-quinone oxidoreductase subunit H.